The primary structure comprises 371 residues: Bifunctional enzyme IspD/IspF (371 aa).

Positions 1-210 (MSEMSLIMLA…LNLPTPSFEI (210 aa)) are 2-C-methyl-D-erythritol 4-phosphate cytidylyltransferase. The segment at 211-371 (FTGNGFDVHE…NLKYFDWTRL (161 aa)) is 2-C-methyl-D-erythritol 2,4-cyclodiphosphate synthase. 2 residues coordinate a divalent metal cation: aspartate 217 and histidine 219. 4-CDP-2-C-methyl-D-erythritol 2-phosphate is bound by residues 217-219 (DVH) and 243-244 (HS). Histidine 251 is a binding site for a divalent metal cation. Residues 265–267 (DIG), 270–274 (YPDTD), 341–344 (TTTE), phenylalanine 348, and arginine 351 each bind 4-CDP-2-C-methyl-D-erythritol 2-phosphate.

In the N-terminal section; belongs to the IspD/TarI cytidylyltransferase family. IspD subfamily. The protein in the C-terminal section; belongs to the IspF family. A divalent metal cation is required as a cofactor.

It catalyses the reaction 2-C-methyl-D-erythritol 4-phosphate + CTP + H(+) = 4-CDP-2-C-methyl-D-erythritol + diphosphate. The catalysed reaction is 4-CDP-2-C-methyl-D-erythritol 2-phosphate = 2-C-methyl-D-erythritol 2,4-cyclic diphosphate + CMP. It functions in the pathway isoprenoid biosynthesis; isopentenyl diphosphate biosynthesis via DXP pathway; isopentenyl diphosphate from 1-deoxy-D-xylulose 5-phosphate: step 2/6. Its pathway is isoprenoid biosynthesis; isopentenyl diphosphate biosynthesis via DXP pathway; isopentenyl diphosphate from 1-deoxy-D-xylulose 5-phosphate: step 4/6. Functionally, bifunctional enzyme that catalyzes the formation of 4-diphosphocytidyl-2-C-methyl-D-erythritol from CTP and 2-C-methyl-D-erythritol 4-phosphate (MEP) (IspD), and catalyzes the conversion of 4-diphosphocytidyl-2-C-methyl-D-erythritol 2-phosphate (CDP-ME2P) to 2-C-methyl-D-erythritol 2,4-cyclodiphosphate (ME-CPP) with a corresponding release of cytidine 5-monophosphate (CMP) (IspF). This chain is Bifunctional enzyme IspD/IspF, found in Campylobacter jejuni (strain RM1221).